The chain runs to 150 residues: Large ribosomal subunit protein uL11 (150 aa).

It belongs to the universal ribosomal protein uL11 family. In terms of assembly, part of the ribosomal stalk of the 50S ribosomal subunit. Interacts with L10 and the large rRNA to form the base of the stalk. L10 forms an elongated spine to which L12 dimers bind in a sequential fashion forming a multimeric L10(L12)X complex. In terms of processing, one or more lysine residues are methylated.

Its function is as follows. Forms part of the ribosomal stalk which helps the ribosome interact with GTP-bound translation factors. This chain is Large ribosomal subunit protein uL11, found in Jannaschia sp. (strain CCS1).